We begin with the raw amino-acid sequence, 449 residues long: Gamma-aminobutyric acid receptor subunit delta (449 aa).

Residues 1–24 (MDVLGWLLLPLLLLCTQPHHGARA) form the signal peptide. Over 25–251 (MNDIGDYVGS…QLRRNRGVYI (227 aa)) the chain is Extracellular. Residues asparagine 103 and asparagine 106 are each glycosylated (N-linked (GlcNAc...) asparagine). Residues cysteine 164 and cysteine 178 are joined by a disulfide bond. The helical transmembrane segment at 252 to 271 (IQSYMPSVLLVAMSWVSFWI) threads the bilayer. Over 272 to 275 (SQAA) the chain is Cytoplasmic. Residues 276 to 298 (VPARVSLGITTVLTMTTLMVSAR) form a helical membrane-spanning segment. At 299–308 (SSLPRASAIK) the chain is on the extracellular side. A helical transmembrane segment spans residues 309 to 331 (ALDVYFWICYVFVFAALVEYAFA). Residues 332 to 423 (HFNADYRKKR…SRLKPIDADT (92 aa)) are Cytoplasmic-facing. Serine 390 is subject to Phosphoserine. The chain crosses the membrane as a helical span at residues 424 to 446 (IDIYARAVFPAAFAAVNIIYWAA). Residues 447–449 (YTM) lie on the Extracellular side of the membrane.

Belongs to the ligand-gated ion channel (TC 1.A.9) family. Gamma-aminobutyric acid receptor (TC 1.A.9.5) subfamily. GABRD sub-subfamily. Heteropentamer, formed by a combination of alpha (GABRA1-6), beta (GABRB1-3), gamma (GABRG1-3), delta (GABRD), epsilon (GABRE), rho (GABRR1-3), pi (GABRP) and theta (GABRQ) chains, each subunit exhibiting distinct physiological and pharmacological properties. Found in the brain, in cerebellar granule cells. Expressed in lungs, in alveolar epithelium.

It is found in the cell membrane. The enzyme catalyses chloride(in) = chloride(out). In terms of biological role, delta subunit of the heteropentameric ligand-gated chloride channel gated by gamma-aminobutyric acid (GABA), a major inhibitory neurotransmitter in the brain. GABA-gated chloride channels, also named GABA(A) receptors (GABAAR), consist of five subunits arranged around a central pore and contain GABA active binding site(s) located at the alpha and beta subunit interface(s). When activated by GABA, GABAARs selectively allow the flow of chloride anions across the cell membrane down their electrochemical gradient. GABAARs containing delta/GABRD subunits are predominantly expressed and located in extrasynaptic or perisynaptic positions on hippocampus and cerebellar granule cells, and contribute to the tonic GABAergic inhibition. GABAAR containing alpha-4-beta-3-delta subunits can simultaneously bind GABA and histamine where histamine binds at the interface of two neighboring beta subunits, which may be involved in the regulation of sleep and wakefulness. The protein is Gamma-aminobutyric acid receptor subunit delta of Rattus norvegicus (Rat).